The sequence spans 266 residues: Small ribosomal subunit protein uS2 (266 aa).

The interval 233–266 (AVREEEFASAPDAGKKGRQAQPKKGKRASDAAAE) is disordered. Residues 248-258 (KGRQAQPKKGK) are compositionally biased toward basic residues.

This sequence belongs to the universal ribosomal protein uS2 family.

This Xylella fastidiosa (strain M23) protein is Small ribosomal subunit protein uS2.